We begin with the raw amino-acid sequence, 433 residues long: Hps1-dma1 cluster O-methyltransferase (433 aa).

Residues 36-55 are disordered; the sequence is NGHPERSLNSTDSVRLSDAP. D285 provides a ligand contact to S-adenosyl-L-methionine. The active-site Proton acceptor is the H331.

The protein belongs to the class I-like SAM-binding methyltransferase superfamily. Cation-independent O-methyltransferase family. COMT subfamily.

It functions in the pathway secondary metabolite biosynthesis. In terms of biological role, O-methyltransferase; part of the hps1-dma1 gene cluster that probably mediates the biosynthesis a derivative of cyclopiazonic acid (CPA). The hybrid polyketide synthase-nonribosomal peptide synthetase (PKS-NRPS) nps1 might incorporates acetyl-CoA, malonyl-CoA, and tryptophan (Trp) and utilizes a C-terminal redox-incompetent reductase domain to make and release the tryptophan tetramic acid, cyclo-acetoacetyl-L-tryptophan (c-AATrp), as the first intermediate in the pathway. In addition, the cluster also includes the tryptophan dimethylallyltransferase dma1, the FAD-dependent oxidoreductase toxD, the cytochrome P450 monooxygenase cyp3.1 and the methyltransferase DOTSEDRAFT_139328; the latter 2 being not present in all CPA-producing fungi but involved in additional modifications that occur in biosynthesis the of a range of CPA and CPA-like products. Further studies are required to clarify whether the CPA-like hps1-dma1 cluster is functional or a non-functional relic reflecting evolution of D.septosporum. The polypeptide is Hps1-dma1 cluster O-methyltransferase (Dothistroma septosporum (strain NZE10 / CBS 128990) (Red band needle blight fungus)).